Reading from the N-terminus, the 431-residue chain is Tryptophan synthase beta chain 2 (431 aa).

Lys-111 is modified (N6-(pyridoxal phosphate)lysine).

It belongs to the TrpB family. Tetramer of two alpha and two beta chains. Pyridoxal 5'-phosphate serves as cofactor.

The catalysed reaction is (1S,2R)-1-C-(indol-3-yl)glycerol 3-phosphate + L-serine = D-glyceraldehyde 3-phosphate + L-tryptophan + H2O. Its pathway is amino-acid biosynthesis; L-tryptophan biosynthesis; L-tryptophan from chorismate: step 5/5. In terms of biological role, the beta subunit is responsible for the synthesis of L-tryptophan from indole and L-serine. The polypeptide is Tryptophan synthase beta chain 2 (trpB2) (Sulfurisphaera tokodaii (strain DSM 16993 / JCM 10545 / NBRC 100140 / 7) (Sulfolobus tokodaii)).